The chain runs to 94 residues: Cell division topological specificity factor (94 aa).

Belongs to the MinE family.

Functionally, prevents the cell division inhibition by proteins MinC and MinD at internal division sites while permitting inhibition at polar sites. This ensures cell division at the proper site by restricting the formation of a division septum at the midpoint of the long axis of the cell. In Beijerinckia indica subsp. indica (strain ATCC 9039 / DSM 1715 / NCIMB 8712), this protein is Cell division topological specificity factor.